Consider the following 951-residue polypeptide: Valine--tRNA ligase (951 aa).

Residues 42-52 (PNVTGSLHMGH) carry the 'HIGH' region motif. Residues 554–558 (KMSKS) carry the 'KMSKS' region motif. K557 contributes to the ATP binding site. Residues 880–944 (AGLINKEDEL…AEAKAKLIEQ (65 aa)) are a coiled coil.

This sequence belongs to the class-I aminoacyl-tRNA synthetase family. ValS type 1 subfamily. Monomer.

The protein resides in the cytoplasm. The catalysed reaction is tRNA(Val) + L-valine + ATP = L-valyl-tRNA(Val) + AMP + diphosphate. Its function is as follows. Catalyzes the attachment of valine to tRNA(Val). As ValRS can inadvertently accommodate and process structurally similar amino acids such as threonine, to avoid such errors, it has a 'posttransfer' editing activity that hydrolyzes mischarged Thr-tRNA(Val) in a tRNA-dependent manner. The sequence is that of Valine--tRNA ligase from Shigella flexneri.